Reading from the N-terminus, the 159-residue chain is Transcriptional repressor NrdR (159 aa).

The segment at cysteine 3–cysteine 34 is a zinc-finger region. The 91-residue stretch at proline 49–alanine 139 folds into the ATP-cone domain.

It belongs to the NrdR family. It depends on Zn(2+) as a cofactor.

Its function is as follows. Negatively regulates transcription of bacterial ribonucleotide reductase nrd genes and operons by binding to NrdR-boxes. In Acinetobacter baylyi (strain ATCC 33305 / BD413 / ADP1), this protein is Transcriptional repressor NrdR.